A 372-amino-acid chain; its full sequence is tRNA-specific 2-thiouridylase MnmA (372 aa).

Residues 16–23 and methionine 42 contribute to the ATP site; that span reads GMSGGVDS. Residues 102–104 form an interaction with target base in tRNA region; that stretch reads NPD. Catalysis depends on cysteine 107, which acts as the Nucleophile. The cysteines at positions 107 and 205 are disulfide-linked. An ATP-binding site is contributed by glycine 132. The interaction with tRNA stretch occupies residues 155-157; sequence KDQ. The active-site Cysteine persulfide intermediate is cysteine 205. The interval 317–318 is interaction with tRNA; the sequence is RY.

The protein belongs to the MnmA/TRMU family.

The protein localises to the cytoplasm. It carries out the reaction S-sulfanyl-L-cysteinyl-[protein] + uridine(34) in tRNA + AH2 + ATP = 2-thiouridine(34) in tRNA + L-cysteinyl-[protein] + A + AMP + diphosphate + H(+). Catalyzes the 2-thiolation of uridine at the wobble position (U34) of tRNA, leading to the formation of s(2)U34. This chain is tRNA-specific 2-thiouridylase MnmA, found in Shewanella baltica (strain OS185).